A 357-amino-acid polypeptide reads, in one-letter code: Peptide chain release factor 1 (357 aa).

Gln233 carries the N5-methylglutamine modification.

The protein belongs to the prokaryotic/mitochondrial release factor family. In terms of processing, methylated by PrmC. Methylation increases the termination efficiency of RF1.

It localises to the cytoplasm. In terms of biological role, peptide chain release factor 1 directs the termination of translation in response to the peptide chain termination codons UAG and UAA. This chain is Peptide chain release factor 1, found in Flavobacterium psychrophilum (strain ATCC 49511 / DSM 21280 / CIP 103535 / JIP02/86).